A 1343-amino-acid chain; its full sequence is DNA-directed RNA polymerase subunit beta (1343 aa).

The protein belongs to the RNA polymerase beta chain family. In terms of assembly, the RNAP catalytic core consists of 2 alpha, 1 beta, 1 beta' and 1 omega subunit. When a sigma factor is associated with the core the holoenzyme is formed, which can initiate transcription.

The enzyme catalyses RNA(n) + a ribonucleoside 5'-triphosphate = RNA(n+1) + diphosphate. DNA-dependent RNA polymerase catalyzes the transcription of DNA into RNA using the four ribonucleoside triphosphates as substrates. This chain is DNA-directed RNA polymerase subunit beta, found in Shewanella baltica (strain OS155 / ATCC BAA-1091).